Reading from the N-terminus, the 1033-residue chain is Immunoglobulin superfamily member 2 (1033 aa).

The signal sequence occupies residues 1-20 (MACILCVASLFLSLTKFSIG). At 21–970 (QREVKIQEGP…VSSLICSSGP (950 aa)) the chain is on the extracellular side. Ig-like C2-type domains follow at residues 22–141 (REVK…TNLT), 144–266 (PDTL…TLIT), 279–388 (PAAR…TQMG), 408–529 (PAAR…QKIS), 539–657 (LRVN…ARVS), 670–797 (PESK…RKTS), and 806–941 (PTGS…KWIN). A disulfide bridge connects residues Cys43 and Cys121. A glycan (N-linked (GlcNAc...) asparagine) is linked at Asn139. Residues Cys168 and Cys249 are joined by a disulfide bond. The EWI motif signature appears at 253-255 (EWI). Cystine bridges form between Cys304-Cys377, Cys432-Cys509, and Cys560-Cys638. N-linked (GlcNAc...) asparagine glycosylation is present at Asn677. 2 disulfide bridges follow: Cys695/Cys776 and Cys832/Cys925. The helical transmembrane segment at 971 to 991 (LLHFLIVCPFVMLLLLATSFL) threads the bilayer. Residues 992–1033 (CLYRKARKLSQLSLSAKKEKALWVGMRKTSLQKEAGEESGHY) lie on the Cytoplasmic side of the membrane.

Post-translationally, N-glycosylated.

The protein localises to the membrane. Functionally, plays a role as inhibitor of T-cells proliferation induced by CD3. Inhibits expression of IL2RA on activated T-cells and secretion of IL2. Inhibits tyrosine kinases that are required for IL2 production and cellular proliferation. Inhibits phospholipase C-gamma-1/PLCG1 phosphorylation and subsequent CD3-induced changes in intracellular free calcium. Prevents nuclear translocation of nuclear factor of activated T-cell to the nucleus. Plays a role in the inhibition of T-cell proliferation via IL10 secretion by cutaneous dendritic cells. This chain is Immunoglobulin superfamily member 2 (Cd101), found in Mus musculus (Mouse).